Reading from the N-terminus, the 395-residue chain is Tubulin-like protein CetZ1 (395 aa).

GTP contacts are provided by residues 10–14, 110–112, E142, N169, and N187; these read QAGGK and GTG.

It belongs to the CetZ family.

The protein localises to the cytoplasm. Its function is as follows. Involved in cell shape control. Essential for the development of a rod-shaped cell type required for efficient swimming. The protein is Tubulin-like protein CetZ1 of Haloferax volcanii (strain ATCC 29605 / DSM 3757 / JCM 8879 / NBRC 14742 / NCIMB 2012 / VKM B-1768 / DS2) (Halobacterium volcanii).